A 246-amino-acid chain; its full sequence is 5'-nucleotidase SurE (246 aa).

The a divalent metal cation site is built by D8, D9, S39, and N91.

Belongs to the SurE nucleotidase family. Requires a divalent metal cation as cofactor.

The protein resides in the cytoplasm. The catalysed reaction is a ribonucleoside 5'-phosphate + H2O = a ribonucleoside + phosphate. In terms of biological role, nucleotidase that shows phosphatase activity on nucleoside 5'-monophosphates. In Dechloromonas aromatica (strain RCB), this protein is 5'-nucleotidase SurE.